Consider the following 283-residue polypeptide: Glutamate racemase (283 aa).

Residues 7–8 (DS) and 39–40 (YG) each bind substrate. The active-site Proton donor/acceptor is the Cys70. A substrate-binding site is contributed by 71-72 (NT). Cys206 (proton donor/acceptor) is an active-site residue. 207-208 (TH) is a substrate binding site.

This sequence belongs to the aspartate/glutamate racemases family.

The enzyme catalyses L-glutamate = D-glutamate. Its pathway is cell wall biogenesis; peptidoglycan biosynthesis. Its function is as follows. Provides the (R)-glutamate required for cell wall biosynthesis. This is Glutamate racemase from Caulobacter sp. (strain K31).